A 285-amino-acid chain; its full sequence is 4-diphosphocytidyl-2-C-methyl-D-erythritol kinase (285 aa).

K28 is an active-site residue. Residue 109-119 participates in ATP binding; sequence PVAAGLGGGSA. D148 is a catalytic residue.

It belongs to the GHMP kinase family. IspE subfamily.

The catalysed reaction is 4-CDP-2-C-methyl-D-erythritol + ATP = 4-CDP-2-C-methyl-D-erythritol 2-phosphate + ADP + H(+). The protein operates within isoprenoid biosynthesis; isopentenyl diphosphate biosynthesis via DXP pathway; isopentenyl diphosphate from 1-deoxy-D-xylulose 5-phosphate: step 3/6. Catalyzes the phosphorylation of the position 2 hydroxy group of 4-diphosphocytidyl-2C-methyl-D-erythritol. In Novosphingobium aromaticivorans (strain ATCC 700278 / DSM 12444 / CCUG 56034 / CIP 105152 / NBRC 16084 / F199), this protein is 4-diphosphocytidyl-2-C-methyl-D-erythritol kinase.